The primary structure comprises 215 residues: MFPLLGLFGGTFDPIHKGHLALANELIQKLPSLTEIQFIPSRQPPHRPSPLASPANRLEMIKRAIANQPNLILNDVEIKGNDISYTINTLKILRPLFLTHALCFILSTDAFADFKHWHQSSVILEYCHLIVVNRPNYRLPQQPWLSDLLSHHQTENAEDLGRFQFGKIFFQTLSPRPISATQIRHYLAKGDYEIVAPLLPKTVLAYIKAHKLYQQ.

It belongs to the NadD family.

It catalyses the reaction nicotinate beta-D-ribonucleotide + ATP + H(+) = deamido-NAD(+) + diphosphate. It participates in cofactor biosynthesis; NAD(+) biosynthesis; deamido-NAD(+) from nicotinate D-ribonucleotide: step 1/1. Catalyzes the reversible adenylation of nicotinate mononucleotide (NaMN) to nicotinic acid adenine dinucleotide (NaAD). The protein is Probable nicotinate-nucleotide adenylyltransferase of Coxiella burnetii (strain Dugway 5J108-111).